The sequence spans 426 residues: uncharacterized protein (426 aa).

Solcar repeat units lie at residues 125–216 (KNNV…MKRV), 226–315 (HSPL…LKRT), and 334–422 (PNGL…CKKW). A run of 6 helical transmembrane segments spans residues 130-151 (YFISGGIAGIVSRTCTAPLDRL), 193-213 (GINVLKVMPESSIKFGTYEAM), 229-249 (LYSYLAGGMAGSVAQMFIYPV), 290-310 (GVLVGILGMFPYSATDLGTFE), 336-356 (GLVMAFGALSGSTGATIVFPL), and 394-415 (LYKGLSPNLLKVAPSVAISYLV).

Belongs to the mitochondrial carrier (TC 2.A.29) family.

The protein resides in the mitochondrion inner membrane. This is an uncharacterized protein from Schizosaccharomyces pombe (strain 972 / ATCC 24843) (Fission yeast).